Consider the following 334-residue polypeptide: Glyceraldehyde-3-phosphate dehydrogenase (334 aa).

NAD(+)-binding positions include 11–12 (RI), Asp33, and Ser119. Residues 149-151 (SCT) and Thr180 contribute to the D-glyceraldehyde 3-phosphate site. Cys150 acts as the Nucleophile in catalysis. Asn181 is a binding site for NAD(+). D-glyceraldehyde 3-phosphate contacts are provided by residues Arg197, 210–211 (TG), and Arg233. Residue Asn314 participates in NAD(+) binding.

Belongs to the glyceraldehyde-3-phosphate dehydrogenase family. In terms of assembly, homotetramer.

Its subcellular location is the cytoplasm. The enzyme catalyses D-glyceraldehyde 3-phosphate + phosphate + NAD(+) = (2R)-3-phospho-glyceroyl phosphate + NADH + H(+). It participates in carbohydrate degradation; glycolysis; pyruvate from D-glyceraldehyde 3-phosphate: step 1/5. In terms of biological role, catalyzes the oxidative phosphorylation of glyceraldehyde 3-phosphate (G3P) to 1,3-bisphosphoglycerate (BPG) using the cofactor NAD. The first reaction step involves the formation of a hemiacetal intermediate between G3P and a cysteine residue, and this hemiacetal intermediate is then oxidized to a thioester, with concomitant reduction of NAD to NADH. The reduced NADH is then exchanged with the second NAD, and the thioester is attacked by a nucleophilic inorganic phosphate to produce BPG. This is Glyceraldehyde-3-phosphate dehydrogenase (gap) from Clostridium acetobutylicum (strain ATCC 824 / DSM 792 / JCM 1419 / IAM 19013 / LMG 5710 / NBRC 13948 / NRRL B-527 / VKM B-1787 / 2291 / W).